Here is a 365-residue protein sequence, read N- to C-terminus: Cobalt-precorrin-5B C(1)-methyltransferase (365 aa).

The protein belongs to the CbiD family.

The enzyme catalyses Co-precorrin-5B + S-adenosyl-L-methionine = Co-precorrin-6A + S-adenosyl-L-homocysteine. It functions in the pathway cofactor biosynthesis; adenosylcobalamin biosynthesis; cob(II)yrinate a,c-diamide from sirohydrochlorin (anaerobic route): step 6/10. In terms of biological role, catalyzes the methylation of C-1 in cobalt-precorrin-5B to form cobalt-precorrin-6A. The polypeptide is Cobalt-precorrin-5B C(1)-methyltransferase (Methanococcus maripaludis (strain C5 / ATCC BAA-1333)).